Here is a 152-residue protein sequence, read N- to C-terminus: Cornifin-A (152 aa).

The tract at residues 20–40 is disordered; sequence EVKQPCQPPPQEPCAPKTKEP. Repeat copies occupy residues 27–34, 35–42, 43–49, 50–57, 58–65, 66–73, 74–81, 82–89, 90–97, 98–105, 106–113, 114–121, 122–129, and 130–137. Positions 27–137 are 14 X 8 AA approximate tandem repeats; it reads PPPQEPCAPK…CQPVVPEPCP (111 aa).

The protein belongs to the cornifin (SPRR) family. As to expression, in squamous epithelia lining the nasal vestibule and in the hard palate.

It localises to the cytoplasm. In terms of biological role, cross-linked envelope protein of keratinocytes. It is a keratinocyte protein that first appears in the cell cytosol, but ultimately becomes cross-linked to membrane proteins by transglutaminase. All that results in the formation of an insoluble envelope beneath the plasma membrane. The chain is Cornifin-A (Sprr1a) from Rattus norvegicus (Rat).